The sequence spans 205 residues: Small ribosomal subunit protein uS4 (205 aa).

The segment at 18–46 (NIWGRPKSPVNRREYGPGQHGQRRKGKLS) is disordered. One can recognise an S4 RNA-binding domain in the interval 94–157 (RRLDTVVFRA…KQLAIVLEAT (64 aa)).

It belongs to the universal ribosomal protein uS4 family. Part of the 30S ribosomal subunit. Contacts protein S5. The interaction surface between S4 and S5 is involved in control of translational fidelity.

In terms of biological role, one of the primary rRNA binding proteins, it binds directly to 16S rRNA where it nucleates assembly of the body of the 30S subunit. With S5 and S12 plays an important role in translational accuracy. The polypeptide is Small ribosomal subunit protein uS4 (Bradyrhizobium sp. (strain BTAi1 / ATCC BAA-1182)).